The following is a 602-amino-acid chain: tRNA uridine 5-carboxymethylaminomethyl modification enzyme MnmG (602 aa).

10–15 (GGGHAG) contacts FAD. The segment at 217–242 (DPQPRGFTGRPGPRAAESPTWQTHTT) is disordered. 267–281 (GPRYCPSIEDKVVRF) contacts NAD(+).

The protein belongs to the MnmG family. As to quaternary structure, homodimer. Heterotetramer of two MnmE and two MnmG subunits. FAD is required as a cofactor.

The protein localises to the cytoplasm. Functionally, NAD-binding protein involved in the addition of a carboxymethylaminomethyl (cmnm) group at the wobble position (U34) of certain tRNAs, forming tRNA-cmnm(5)s(2)U34. The polypeptide is tRNA uridine 5-carboxymethylaminomethyl modification enzyme MnmG (Deinococcus geothermalis (strain DSM 11300 / CIP 105573 / AG-3a)).